We begin with the raw amino-acid sequence, 132 residues long: Secreted RxLR effector protein BLR08 (132 aa).

The signal sequence occupies residues 1–22 (MRHKCLLAMAVVASMAFYSVIS). A glycan (N-linked (GlcNAc...) asparagine) is linked at asparagine 25. A disordered region spans residues 36–57 (NRRLRPRVEPTANELDKQSDVD). Positions 37-83 (RRLRPRVEPTANELDKQSDVDTKLEADRRLGYPGESGFMLEGELEER) match the RxLR-dEER motif. The chain crosses the membrane as a helical span at residues 111–131 (FFLGLFASVIGVSIISACYGI).

This sequence belongs to the RxLR effector family. Interacts with host transcription factor NAC069.

It localises to the secreted. The protein localises to the host endoplasmic reticulum membrane. Secreted effector that inhibits stress-induced relocalization of the transcription factor NAC069 to the nucleus, thus affecting its broad role in abiotic and biotic stress responses. This chain is Secreted RxLR effector protein BLR08, found in Bremia lactucae (Lettuce downy mildew).